Here is a 667-residue protein sequence, read N- to C-terminus: MKEKSKNAAKTRREKENGEFYELAKLLPLPSAITSQLDKASIIRLTTSYLKMRAVFPEGLGDAWGQPSRAGPLDGVAKELGSHLLQTLDGFVFVVASDGKIMYISETASVHLGLSQVELTGNSIYEYIHPSDHDEMTAVLTAHQPLHHHLLQEYEIERSFFLRMKCVLAKRNAGLTCSGYKVIHCSGYLKIRQYMLDMSLYDSCYQIVGLVAVGQSLPPSAITEIKLYSNMFMFRASLDLKLIFLDSRVTEVTGYEPQDLIEKTLYHHVHGCDVFHLRYAHHLLLVKGQVTTKYYRLLSKRGGWVWVQSYATVVHNSRSSRPHCIVSVNYVLTEIEYKELQLSLEQVSTAKSQDSWRTALSTSQETRKLVKPKNTKMKTKLRTNPYPPQQYSSFQMDKLECGQLGNWRASPPASAAAPPELQPHSESSDLLYTPSYSLPFSYHYGHFPLDSHVFSSKKPMLPAKFGQPQGSPCEVARFFLSTLPASGECQWHYANPLVPSSSSPAKNPPEPPANTARHSLVPSYEAPAAAVRRFGEDTAPPSFPSCGHYREEPALGPAKAARQAARDGARLALARAAPECCAPPTPEAPGAPAQLPFVLLNYHRVLARRGPLGGAAPAASGLACAPGGPEAATGALRLRHPSPAATSPPGAPLPHYLGASVIITNGR.

The bHLH domain maps to 1-53 (MKEKSKNAAKTRREKENGEFYELAKLLPLPSAITSQLDKASIIRLTTSYLKMR). 2 PAS domains span residues 77-149 (AKEL…LHHH) and 218-288 (PPSA…LVKG). The PAC domain maps to 292–335 (TKYYRLLSKRGGWVWVQSYATVVHNSRSSRPHCIVSVNYVLTEI). Positions 336–667 (EYKELQLSLE…GASVIITNGR (332 aa)) constitute a Single-minded C-terminal domain. 3 disordered regions span residues 356 to 389 (WRTA…YPPQ), 409 to 428 (ASPP…SESS), and 500 to 520 (SSSS…RHSL). Residues 367 to 386 (RKLVKPKNTKMKTKLRTNPY) carry the Nuclear localization signal motif. Basic residues predominate over residues 369-381 (LVKPKNTKMKTKL). Low complexity predominate over residues 409–419 (ASPPASAAAPP).

Efficient DNA binding requires dimerization with another bHLH protein. Heterodimer of SIM2 and ARNT.

It localises to the nucleus. Functionally, transcription factor that may be a master gene of CNS development in cooperation with Arnt. It may have pleiotropic effects in the tissues expressed during development. The polypeptide is Single-minded homolog 2 (SIM2) (Homo sapiens (Human)).